Here is a 483-residue protein sequence, read N- to C-terminus: Acetyltransferase AOL_s00215g273 (483 aa).

Helical transmembrane passes span A9–V29, I33–L53, V141–C161, I191–V211, F292–G312, V334–W354, W372–I392, and L453–F473.

It belongs to the wax synthase family.

It is found in the membrane. It functions in the pathway secondary metabolite biosynthesis; terpenoid biosynthesis. Acetyltransferase; part of the gene cluster that mediates the biosynthesis of sesquiterpenyl epoxy-cyclohexenoids (SECs) such as anthrobotrisins and arthrosporols, metabolites that possess a novel hybrid carbon skeleton consisting of a polyketide-derived epoxycyclohexenol combined with a terpenoid-derived monocyclic sesquiterpenol substructure (PKS-PTS hybrid). The SEC pathway plays an important role for fungal soil colonization via decreasing fungal nematode-capturing ability. The role of the acetyltransferase in SEC biosynthesis has still to be determined. The pathway begins with the biosynthesis of 6-methylsalicylic acid (6-MSA), the first precursor of the polyketide-derived epoxycyclohexenol in arthrosporols, by the polyketide synthase (PKS) AOL_s00215g283 via condensation of 1 acetate and 3 malonate units. The 6-methylsalicylic acid decarboxylase AOL_s00215g281 then catalyzes the decarboxylation of 6-methylsalicylic acid to yield m-cresol. The cytochrome P450 monooxygenase AOL_s00215g282 further oxidizes m-cresol to yield toluquinol. With the assistance of the oxidoreductase AOL_s00215g277, the polyprenyl transferase AOL_s00215g276 catalyzes the farnesylation of toluquinol to produce farnesyl hydroquinone, the hybrid precursor for biosynthesis of SECs. Farnesyl hydroquinone undergoes epoxidation and then subsequent dehydrogenation to form farnesyl epoxy-quinone, the first and simplest SEC. The cytochrome P450 monooxygenase AOL_s00215g278 and the FAD-dependent monooxygenase AOL_s00215g279 might be involved in the oxygenation of the phenol moiety, most likely in the epoxy formation. The cytochrome P450 monooxygenases AOL_s00215g274 and AOL_s00215g280 are involved in specific regional ketone reductions at respectively C-4 and C-1 of farnesyl epoxy-quinone PubMed:33823587. The protein is Acetyltransferase AOL_s00215g273 of Arthrobotrys oligospora (strain ATCC 24927 / CBS 115.81 / DSM 1491) (Nematode-trapping fungus).